A 111-amino-acid polypeptide reads, in one-letter code: HTH-type transcriptional regulator SinR (111 aa).

The HTH cro/C1-type domain maps to 6 to 61 (IKQYRKEKGYSLSELAEKAGVAKSYLSSIERNLQTNPSIQFLEKVSAVLDVSVHTL). Positions 17–36 (LSELAEKAGVAKSYLSSIER) form a DNA-binding region, H-T-H motif. Residues 65 to 103 (KDETEYDGQLDSEWENLVRDAMASGVSKKQFREFLDYQK) form the Sin domain.

Homotetramer. Also associates with SinI.

In terms of biological role, affects autolysin level and flagellation. The polypeptide is HTH-type transcriptional regulator SinR (sinR) (Bacillus licheniformis).